Reading from the N-terminus, the 1051-residue chain is Kinesin-like protein KIN-4B (1051 aa).

The tract at residues 1 to 21 (MESHSSLSSSSSSSPPSSLSS) is disordered. The Kinesin motor domain maps to 25–380 (CVKVAVNVRP…LKYANRARNI (356 aa)). ATP is bound at residue 104–111 (GQTGSGKT). Coiled coils occupy residues 414-448 (ATSS…RSKR) and 540-644 (RQHF…KMKQ). The segment covering 916–925 (SSSYSGSSRS) has biased composition (low complexity). Disordered regions lie at residues 916-946 (SSSY…SSTY) and 1029-1051 (MSKS…FQGA).

The protein belongs to the TRAFAC class myosin-kinesin ATPase superfamily. Kinesin family. KIN-4 subfamily. As to quaternary structure, homodimer.

Functionally, kinesin-like motor protein involved in the control of the oriented deposition of cellulose microfibrils. The protein is Kinesin-like protein KIN-4B of Arabidopsis thaliana (Mouse-ear cress).